The sequence spans 229 residues: Ribose-5-phosphate isomerase A (229 aa).

Substrate-binding positions include 28-31 (TGST), 85-88 (DGAD), and 98-101 (KGRG). The active-site Proton acceptor is the glutamate 107. Substrate is bound at residue lysine 125.

It belongs to the ribose 5-phosphate isomerase family. As to quaternary structure, homodimer.

It carries out the reaction aldehydo-D-ribose 5-phosphate = D-ribulose 5-phosphate. Its pathway is carbohydrate degradation; pentose phosphate pathway; D-ribose 5-phosphate from D-ribulose 5-phosphate (non-oxidative stage): step 1/1. Its function is as follows. Catalyzes the reversible conversion of ribose-5-phosphate to ribulose 5-phosphate. This is Ribose-5-phosphate isomerase A from Pyrococcus abyssi (strain GE5 / Orsay).